The primary structure comprises 626 residues: Chaperone protein HtpG (626 aa).

An a; substrate-binding region spans residues 1–341; the sequence is METKQFKAES…SEDLSLNISR (341 aa). The tract at residues 342–552 is b; that stretch reads EILQHDRQLK…EGELSIEMEK (211 aa). Residues 490-509 form a disordered region; sequence DLGIEGEEKENTSNSDDKEN. Residues 498 to 509 show a composition bias toward basic and acidic residues; the sequence is KENTSNSDDKEN. The tract at residues 553 to 626 is c; sequence VLNAMPNNQN…FTNNICKIMK (74 aa).

The protein belongs to the heat shock protein 90 family. In terms of assembly, homodimer.

The protein resides in the cytoplasm. Functionally, molecular chaperone. Has ATPase activity. The polypeptide is Chaperone protein HtpG (Clostridium botulinum (strain ATCC 19397 / Type A)).